The sequence spans 211 residues: Large ribosomal subunit protein uL3 (211 aa).

Residue Gln-150 is modified to N5-methylglutamine.

The protein belongs to the universal ribosomal protein uL3 family. As to quaternary structure, part of the 50S ribosomal subunit. Forms a cluster with proteins L14 and L19. Methylated by PrmB.

Functionally, one of the primary rRNA binding proteins, it binds directly near the 3'-end of the 23S rRNA, where it nucleates assembly of the 50S subunit. The protein is Large ribosomal subunit protein uL3 of Pseudomonas syringae pv. syringae (strain B728a).